The sequence spans 925 residues: Probable replication restart protein PriA (925 aa).

Residues cysteine 645, cysteine 648, cysteine 654, cysteine 657, cysteine 672, cysteine 675, cysteine 685, and cysteine 688 each contribute to the Zn(2+) site.

Belongs to the helicase family. PriA subfamily. In terms of assembly, interacts with DnaB (DR_0549). Component of the replication restart primosome. Zn(2+) is required as a cofactor.

In terms of biological role, initiates the restart of stalled replication forks, which reloads the replicative helicase on sites other than the origin of replication. Recognizes abandoned replication forks and remodels them to uncover a helicase loading site. Promotes assembly of the primosome at these replication forks. Recognizes and binds DNA at stalled replication forks, also binds single-stranded (ss)DNA. The sequence is that of Probable replication restart protein PriA from Deinococcus radiodurans (strain ATCC 13939 / DSM 20539 / JCM 16871 / CCUG 27074 / LMG 4051 / NBRC 15346 / NCIMB 9279 / VKM B-1422 / R1).